Here is a 104-residue protein sequence, read N- to C-terminus: Small ribosomal subunit protein uS10 (104 aa).

It belongs to the universal ribosomal protein uS10 family. Part of the 30S ribosomal subunit.

Functionally, involved in the binding of tRNA to the ribosomes. In Aquifex aeolicus (strain VF5), this protein is Small ribosomal subunit protein uS10.